Here is a 101-residue protein sequence, read N- to C-terminus: Large ribosomal subunit protein uL24 (101 aa).

This sequence belongs to the universal ribosomal protein uL24 family. In terms of assembly, part of the 50S ribosomal subunit.

One of two assembly initiator proteins, it binds directly to the 5'-end of the 23S rRNA, where it nucleates assembly of the 50S subunit. Its function is as follows. One of the proteins that surrounds the polypeptide exit tunnel on the outside of the subunit. This chain is Large ribosomal subunit protein uL24, found in Streptococcus suis (strain 98HAH33).